Reading from the N-terminus, the 64-residue chain is MKVNDRVTVKTDGGPRRPGVVLAVEEFSEGTMYLVSLEDYPLGIWFFNESGHQDGIFVEKAEQD.

It belongs to the DsrB family.

The polypeptide is Protein DsrB (Salmonella enteritidis PT4 (strain P125109)).